Here is a 255-residue protein sequence, read N- to C-terminus: Venom allergen-1 (255 aa).

A signal peptide spans 1–21 (MASHVIVKFITAAILIGSCYA). The region spanning 65 to 210 (LKKHNELRAE…VIKYYLVCNY (146 aa)) is the SCP domain. Asn146 and Asn209 each carry an N-linked (GlcNAc...) asparagine glycan.

This sequence belongs to the CRISP family. In terms of assembly, interacts with human LRPPRC; the interaction interrupts association between BECN1 and LRPPRC. Interacts with human CD4. As to quaternary structure, (Microbial infection) Interacts with Zika virus envelope protein E and Zika virus-like particles; the interaction does not affect Zika virus replication in human endothelial cells and keratinocytes. In terms of tissue distribution, saliva (at protein level). Female salivary gland. No or low-level expression in female hemolymph, midgut, Malpighian tubule system and ovary. No or low-level expression in male tissues.

It localises to the secreted. Its subcellular location is the host endosome. The protein resides in the host mitochondrion. Its function is as follows. Activates autophagy in human monocytic cells, dendritic cells and macrophages. Promotes activation of human CD4(+) T-cells. Does not affect cytokine expression in human monocytic cells. Functionally, (Microbial infection) Promotes dengue virus type 2 replication in human monocytic cells, dendritic cells and macrophages. Pro-viral properties are linked to BECN1-mediated autophagy activation in the host. Does not directly interact with the purified envelope protein of dengue virus type 2. (Microbial infection) Promotes Zika virus replication in human monocytic cells, dendritic cells and macrophages. Facilitates Zika virus transmission from infected mosquitoes to the host in mouse model. Pro-viral properties are linked to BECN1-mediated autophagy activation in the host. Does not affect Zika virus replication in human endothelial cells and keratinocytes. In terms of biological role, (Microbial infection) Promotes Semliki Forest virus replication in human monocytic cells. Its function is as follows. (Microbial infection) Does not influence Batai virus replication in human monocytic cells. The protein is Venom allergen-1 of Aedes aegypti (Yellowfever mosquito).